The following is a 76-amino-acid chain: uncharacterized protein (76 aa).

The next 2 membrane-spanning stretches (helical) occupy residues 9–29 (AIGIVVHLIFIAVTWWALQAV) and 45–65 (LLMILLTIAIGTAVANFFLDY).

The protein localises to the cell membrane. This is an uncharacterized protein from Bacillus subtilis (strain 168).